Here is a 485-residue protein sequence, read N- to C-terminus: GTPase Der (485 aa).

EngA-type G domains follow at residues 3 to 167 (PTIA…PEPE) and 176 to 349 (PVFA…NAAM). GTP-binding positions include 9-16 (GRPNVGKS), 56-60 (DTGGF), 119-122 (NKGE), 182-189 (GRPNVGKS), 229-233 (DTAGV), and 294-297 (NKWD). The 85-residue stretch at 350–434 (IKMPTPKITR…PLRIQYNVSE (85 aa)) folds into the KH-like domain. The disordered stretch occupies residues 435–485 (NPYENAEDKPKKKPLRRVSLSNRIEKREGRKEEKNRFKKKTKVSVKKQFSK). Positions 457–469 (RIEKREGRKEEKN) are enriched in basic and acidic residues. Residues 470 to 485 (RFKKKTKVSVKKQFSK) are compositionally biased toward basic residues.

Belongs to the TRAFAC class TrmE-Era-EngA-EngB-Septin-like GTPase superfamily. EngA (Der) GTPase family. Associates with the 50S ribosomal subunit.

Its function is as follows. GTPase that plays an essential role in the late steps of ribosome biogenesis. This chain is GTPase Der, found in Neisseria meningitidis serogroup C / serotype 2a (strain ATCC 700532 / DSM 15464 / FAM18).